A 313-amino-acid polypeptide reads, in one-letter code: Ribonuclease HIII (313 aa).

Residues 63–85 form a disordered region; sequence ARWGTAEPQEKKKTAKKPADPRY. Basic and acidic residues predominate over residues 70 to 82; that stretch reads PQEKKKTAKKPAD. The 217-residue stretch at 94-310 folds into the RNase H type-2 domain; the sequence is MSVIGSDEVG…TQKAQRLADK (217 aa). Residues Asp-100, Glu-101, and Asp-205 each contribute to the a divalent metal cation site.

Belongs to the RNase HII family. RnhC subfamily. As to quaternary structure, interacts with the RNA polymerase core. Mn(2+) serves as cofactor. The cofactor is Mg(2+).

It is found in the cytoplasm. It carries out the reaction Endonucleolytic cleavage to 5'-phosphomonoester.. Endonuclease that specifically degrades the RNA of RNA-DNA hybrids. The polypeptide is Ribonuclease HIII (rnhC) (Bacillus subtilis (strain 168)).